Here is a 339-residue protein sequence, read N- to C-terminus: Photosystem II assembly lipoprotein Ycf48 (339 aa).

A signal peptide spans 1–22 (MVIVKSWQKIFALLVVLLLCIG). A lipid anchor (N-palmitoyl cysteine) is attached at C23. Residue C23 is the site of S-diacylglycerol cysteine attachment.

It belongs to the Ycf48 family. As to quaternary structure, part of early PSII assembly complexes which includes D1 (psbA) and PsbI; not found in mature PSII. Binds to the lumenal side of PSII complexes. Interacts with YidC.

Its subcellular location is the cellular thylakoid membrane. Its function is as follows. A factor required for optimal assembly of photosystem II (PSII), acting in the early stages of PSII assembly. Also plays a role in replacement of photodamaged D1 (psbA). Assists YidC in synthesis of chlorophyll-binding proteins. This is Photosystem II assembly lipoprotein Ycf48 from Trichormus variabilis (strain ATCC 29413 / PCC 7937) (Anabaena variabilis).